Consider the following 163-residue polypeptide: Large ribosomal subunit protein uL15 (163 aa).

Positions 1–43 (MKLNEIADNEGSRKKRTRVGRGIGSGKGKQSGRGGKGQTARSG) are disordered. The segment covering 21–37 (RGIGSGKGKQSGRGGKG) has biased composition (gly residues).

This sequence belongs to the universal ribosomal protein uL15 family. Part of the 50S ribosomal subunit.

Functionally, binds to the 23S rRNA. The polypeptide is Large ribosomal subunit protein uL15 (Afipia carboxidovorans (strain ATCC 49405 / DSM 1227 / KCTC 32145 / OM5) (Oligotropha carboxidovorans)).